The sequence spans 46 residues: Esculentin-1a/b (46 aa).

Cys40 and Cys46 form a disulfide bridge.

Belongs to the frog skin active peptide (FSAP) family. Esculentin subfamily. As to expression, expressed by the skin glands.

It is found in the secreted. Functionally, antimicrobial peptide. Stimulates insulin secretion by BRIN-BD11 cells in vitro. Shows hemolytic activity. The chain is Esculentin-1a/b from Pelophylax ridibundus (Marsh frog).